The primary structure comprises 59 residues: Large ribosomal subunit protein uL30 (59 aa).

The protein belongs to the universal ribosomal protein uL30 family. In terms of assembly, part of the 50S ribosomal subunit.

This is Large ribosomal subunit protein uL30 from Listeria welshimeri serovar 6b (strain ATCC 35897 / DSM 20650 / CCUG 15529 / CIP 8149 / NCTC 11857 / SLCC 5334 / V8).